The following is a 304-amino-acid chain: Acetyl-coenzyme A carboxylase carboxyl transferase subunit beta (304 aa).

The region spanning 23–292 (VWTKCDSCGQ…PNPEAPREGV (270 aa)) is the CoA carboxyltransferase N-terminal domain. Zn(2+) is bound by residues cysteine 27, cysteine 30, cysteine 46, and cysteine 49. A C4-type zinc finger spans residues 27 to 49 (CDSCGQVLYRAELERNLEVCPKC). The disordered stretch occupies residues 285-304 (PEAPREGVVVPPVPDQEPEA). Residues 295-304 (PPVPDQEPEA) show a composition bias toward pro residues.

This sequence belongs to the AccD/PCCB family. In terms of assembly, acetyl-CoA carboxylase is a heterohexamer composed of biotin carboxyl carrier protein (AccB), biotin carboxylase (AccC) and two subunits each of ACCase subunit alpha (AccA) and ACCase subunit beta (AccD). Zn(2+) is required as a cofactor.

Its subcellular location is the cytoplasm. It catalyses the reaction N(6)-carboxybiotinyl-L-lysyl-[protein] + acetyl-CoA = N(6)-biotinyl-L-lysyl-[protein] + malonyl-CoA. It participates in lipid metabolism; malonyl-CoA biosynthesis; malonyl-CoA from acetyl-CoA: step 1/1. Functionally, component of the acetyl coenzyme A carboxylase (ACC) complex. Biotin carboxylase (BC) catalyzes the carboxylation of biotin on its carrier protein (BCCP) and then the CO(2) group is transferred by the transcarboxylase to acetyl-CoA to form malonyl-CoA. In Shigella sonnei (strain Ss046), this protein is Acetyl-coenzyme A carboxylase carboxyl transferase subunit beta.